The primary structure comprises 602 residues: (R)-limonene synthase (602 aa).

Residues D356, D360, D500, T504, and E508 each contribute to the Mg(2+) site. The short motif at 356 to 360 is the DDXXD motif element; sequence DDVYD.

This sequence belongs to the terpene synthase family. The cofactor is Mg(2+). Requires Mn(2+) as cofactor.

The enzyme catalyses (2E)-geranyl diphosphate = (4R)-limonene + diphosphate. Catalyzes the formation of (R)-(+)-limonene, terpinolene, (1R,5S)-(+)-camphene, (1R,5R)-(+)-alpha-pinene, beta-myrcene and traces of alpha-phellandrene. This chain is (R)-limonene synthase, found in Lavandula angustifolia (Lavender).